The following is a 169-amino-acid chain: Small ribosomal subunit protein uS5c (169 aa).

The S5 DRBM domain maps to 17 to 80 (WQERVVQIRR…ADGKKHVVEV (64 aa)).

Belongs to the universal ribosomal protein uS5 family. Part of the 30S ribosomal subunit. Contacts protein S4.

The protein resides in the plastid. It localises to the cyanelle. In terms of biological role, with S4 and S12 plays an important role in translational accuracy. The polypeptide is Small ribosomal subunit protein uS5c (rps5) (Cyanophora paradoxa).